The following is a 190-amino-acid chain: Potassium-transporting ATPase KdpC subunit (190 aa).

Residues 10 to 30 form a helical membrane-spanning segment; it reads TFLFLLLITGGVYPLLTTALG.

The protein belongs to the KdpC family. The system is composed of three essential subunits: KdpA, KdpB and KdpC.

It is found in the cell inner membrane. In terms of biological role, part of the high-affinity ATP-driven potassium transport (or Kdp) system, which catalyzes the hydrolysis of ATP coupled with the electrogenic transport of potassium into the cytoplasm. This subunit acts as a catalytic chaperone that increases the ATP-binding affinity of the ATP-hydrolyzing subunit KdpB by the formation of a transient KdpB/KdpC/ATP ternary complex. This chain is Potassium-transporting ATPase KdpC subunit, found in Escherichia coli O7:K1 (strain IAI39 / ExPEC).